The primary structure comprises 143 residues: ATP synthase subunit b' (143 aa).

A helical transmembrane segment spans residues 6–26 (ATLPLMALQFLVLAVVLNAVF).

It belongs to the ATPase B chain family. F-type ATPases have 2 components, F(1) - the catalytic core - and F(0) - the membrane proton channel. F(1) has five subunits: alpha(3), beta(3), gamma(1), delta(1), epsilon(1). F(0) has four main subunits: a(1), b(1), b'(1) and c(10-14). The alpha and beta chains form an alternating ring which encloses part of the gamma chain. F(1) is attached to F(0) by a central stalk formed by the gamma and epsilon chains, while a peripheral stalk is formed by the delta, b and b' chains.

The protein resides in the cellular thylakoid membrane. Functionally, f(1)F(0) ATP synthase produces ATP from ADP in the presence of a proton or sodium gradient. F-type ATPases consist of two structural domains, F(1) containing the extramembraneous catalytic core and F(0) containing the membrane proton channel, linked together by a central stalk and a peripheral stalk. During catalysis, ATP synthesis in the catalytic domain of F(1) is coupled via a rotary mechanism of the central stalk subunits to proton translocation. Its function is as follows. Component of the F(0) channel, it forms part of the peripheral stalk, linking F(1) to F(0). The b'-subunit is a diverged and duplicated form of b found in plants and photosynthetic bacteria. The chain is ATP synthase subunit b' from Gloeothece citriformis (strain PCC 7424) (Cyanothece sp. (strain PCC 7424)).